The primary structure comprises 204 residues: Large ribosomal subunit protein bL25 (204 aa).

The protein belongs to the bacterial ribosomal protein bL25 family. CTC subfamily. Part of the 50S ribosomal subunit; part of the 5S rRNA/L5/L18/L25 subcomplex. Contacts the 5S rRNA. Binds to the 5S rRNA independently of L5 and L18.

Its function is as follows. This is one of the proteins that binds to the 5S RNA in the ribosome where it forms part of the central protuberance. The chain is Large ribosomal subunit protein bL25 from Burkholderia mallei (strain NCTC 10247).